A 147-amino-acid polypeptide reads, in one-letter code: Deoxyuridine 5'-triphosphate nucleotidohydrolase (147 aa).

Arginine 24 is a binding site for Mg(2+). DUTP is bound by residues 68-70 (PRS), 82-85 (GVID), tyrosine 88, glycine 93, isoleucine 95, and arginine 111.

Belongs to the dUTPase family.

The catalysed reaction is dUTP + H2O = dUMP + diphosphate + H(+). This enzyme is involved in nucleotide metabolism: it produces dUMP, the immediate precursor of thymidine nucleotides and it decreases the intracellular concentration of dUTP so that uracil cannot be incorporated into DNA. The protein is Deoxyuridine 5'-triphosphate nucleotidohydrolase (OPG046) of Homo sapiens (Human).